Here is a 144-residue protein sequence, read N- to C-terminus: Putative pre-16S rRNA nuclease (144 aa).

This sequence belongs to the YqgF nuclease family.

The protein localises to the cytoplasm. Could be a nuclease involved in processing of the 5'-end of pre-16S rRNA. This is Putative pre-16S rRNA nuclease from Pseudomonas aeruginosa (strain LESB58).